The following is a 301-amino-acid chain: Homoserine O-acetyltransferase (301 aa).

Cys142 functions as the Acyl-thioester intermediate in the catalytic mechanism. Substrate contacts are provided by Lys163 and Ser192. Residue His235 is the Proton acceptor of the active site. Residue Glu237 is part of the active site. Arg249 contributes to the substrate binding site.

This sequence belongs to the MetA family.

The protein resides in the cytoplasm. The catalysed reaction is L-homoserine + acetyl-CoA = O-acetyl-L-homoserine + CoA. It participates in amino-acid biosynthesis; L-methionine biosynthesis via de novo pathway; O-acetyl-L-homoserine from L-homoserine: step 1/1. Functionally, transfers an acetyl group from acetyl-CoA to L-homoserine, forming acetyl-L-homoserine. This is Homoserine O-acetyltransferase from Bacillus cereus (strain B4264).